The chain runs to 591 residues: MKKISLPKIGIRPVIDGRRMGVRESLEEQTMNMAKATAALLTEKLRHACGAAVECVISDTCIAGMAEAAACEEKFSSQNVGLTITVTPCWCYGSETIDMDPTRPKAIWGFNGTERPGAVYLAAALAAHSQKGIPAFSIYGHDVQDADDTSIPADVEEKLLRFARAGLAVASMKGKSYLSLGGVSMGIAGSIVDHNFFESWLGMKVQAVDMTELRRRIDQKIYDEAELEMALAWADKNFRYGEDENNKQYQRNAEQSRAVLRESLLMAMCIRDMMQGNSKLADIGRVEESLGYNAIAAGFQGQRHWTDQYPNGDTAEALLNSSFDWNGVREPFVVATENDSLNGVAMLMGHQLTGTAQVFADVRTYWSPEAIERVTGHKLDGLAEHGIIHLINSGSAALDGSCKQRDSEGNPTMKPHWEISQQEADACLAATEWCPAIHEYFRGGGYSSRFLTEGGVPFTMTRVNIIKGLGPVLQIAEGWSVELPKDVHDILNKRTNSTWPTTWFAPRLTGKGPFTDVYSVMANWGANHGVLTIGHVGADFITLASMLRIPVCMHNVEETKVYRPSAWAAHGMDIEGQDYRACQNYGPLYKR.

Active-site proton acceptor residues include E337 and D361. E337, D361, and H528 together coordinate Mn(2+).

Belongs to the L-fucose isomerase family. In terms of assembly, homohexamer. The cofactor is Mn(2+).

It localises to the cytoplasm. It carries out the reaction L-fucose = L-fuculose. Its pathway is carbohydrate degradation; L-fucose degradation; L-lactaldehyde and glycerone phosphate from L-fucose: step 1/3. Functionally, converts the aldose L-fucose into the corresponding ketose L-fuculose. This chain is L-fucose isomerase, found in Escherichia coli (strain SMS-3-5 / SECEC).